The following is a 336-amino-acid chain: MSSAIPLNVGIARSAGTATVDADTAKRVLLAEPRGYCAGVDRAVETVEKALEKHGAPIYVRKEIVHNRHVVETLRERGVVFVDDTAEVPEGAVVVFSAHGVSPAVHEAAAARNLHTIDATCPLVTKVHQEAKRFARDDYDILLIGHEGHEEVEGTAGEAPEHVQLVDGPDAVDRVRVRDENKVIWLSQTTLSVDETMETVQRLRERFPSLQDPPSDDICYATQNRQVAVKAMAPECDLVIVVGSRNSSNSVRLVEVALNAGAKAAHLVDYAREVDPAWLEGVRTIGITSGASVPEILVRGVLDMLAEHGYADVQPVTTANETLVFALPRELRTTRR.

Position 37 (cysteine 37) interacts with [4Fe-4S] cluster. (2E)-4-hydroxy-3-methylbut-2-enyl diphosphate is bound by residues histidine 66 and histidine 99. Residues histidine 66 and histidine 99 each contribute to the dimethylallyl diphosphate site. 2 residues coordinate isopentenyl diphosphate: histidine 66 and histidine 99. Cysteine 121 lines the [4Fe-4S] cluster pocket. Histidine 149 serves as a coordination point for (2E)-4-hydroxy-3-methylbut-2-enyl diphosphate. Histidine 149 is a dimethylallyl diphosphate binding site. Histidine 149 is a binding site for isopentenyl diphosphate. Glutamate 151 functions as the Proton donor in the catalytic mechanism. Residue threonine 189 participates in (2E)-4-hydroxy-3-methylbut-2-enyl diphosphate binding. Cysteine 219 contributes to the [4Fe-4S] cluster binding site. The (2E)-4-hydroxy-3-methylbut-2-enyl diphosphate site is built by serine 247, serine 248, asparagine 249, and serine 292. Dimethylallyl diphosphate is bound by residues serine 247, serine 248, asparagine 249, and serine 292. Residues serine 247, serine 248, asparagine 249, and serine 292 each coordinate isopentenyl diphosphate.

Belongs to the IspH family. The cofactor is [4Fe-4S] cluster.

The catalysed reaction is isopentenyl diphosphate + 2 oxidized [2Fe-2S]-[ferredoxin] + H2O = (2E)-4-hydroxy-3-methylbut-2-enyl diphosphate + 2 reduced [2Fe-2S]-[ferredoxin] + 2 H(+). It carries out the reaction dimethylallyl diphosphate + 2 oxidized [2Fe-2S]-[ferredoxin] + H2O = (2E)-4-hydroxy-3-methylbut-2-enyl diphosphate + 2 reduced [2Fe-2S]-[ferredoxin] + 2 H(+). Its pathway is isoprenoid biosynthesis; dimethylallyl diphosphate biosynthesis; dimethylallyl diphosphate from (2E)-4-hydroxy-3-methylbutenyl diphosphate: step 1/1. The protein operates within isoprenoid biosynthesis; isopentenyl diphosphate biosynthesis via DXP pathway; isopentenyl diphosphate from 1-deoxy-D-xylulose 5-phosphate: step 6/6. Its function is as follows. Catalyzes the conversion of 1-hydroxy-2-methyl-2-(E)-butenyl 4-diphosphate (HMBPP) into a mixture of isopentenyl diphosphate (IPP) and dimethylallyl diphosphate (DMAPP). Acts in the terminal step of the DOXP/MEP pathway for isoprenoid precursor biosynthesis. The sequence is that of 4-hydroxy-3-methylbut-2-enyl diphosphate reductase from Nocardia farcinica (strain IFM 10152).